Reading from the N-terminus, the 513-residue chain is RNA-splicing ligase RtcB homolog (513 aa).

Mn(2+) is bound by residues D127, C130, H235, H267, and H361. GMP is bound at residue 234–238 (NHYAE). Residues 361–362 (HN), 410–413 (GGTM), S417, 436–439 (HGAG), and K512 contribute to the GMP site. The active-site GMP-histidine intermediate is the H436.

The protein belongs to the RtcB family. As to quaternary structure, catalytic component of the tRNA-splicing ligase complex. It depends on Mn(2+) as a cofactor.

The enzyme catalyses a 3'-end 3'-phospho-ribonucleotide-RNA + a 5'-end dephospho-ribonucleoside-RNA + GTP = a ribonucleotidyl-ribonucleotide-RNA + GMP + diphosphate. It carries out the reaction a 3'-end 2',3'-cyclophospho-ribonucleotide-RNA + a 5'-end dephospho-ribonucleoside-RNA + GTP + H2O = a ribonucleotidyl-ribonucleotide-RNA + GMP + diphosphate + H(+). Catalytic subunit of the tRNA-splicing ligase complex that acts by directly joining spliced tRNA halves to mature-sized tRNAs by incorporating the precursor-derived splice junction phosphate into the mature tRNA as a canonical 3',5'-phosphodiester. May act as an RNA ligase with broad substrate specificity, and may function toward other RNAs. The chain is RNA-splicing ligase RtcB homolog from Micromonas commoda (strain RCC299 / NOUM17 / CCMP2709) (Picoplanktonic green alga).